Here is a 264-residue protein sequence, read N- to C-terminus: Thymidylate synthase (264 aa).

Residue R21 coordinates dUMP. H51 contacts (6R)-5,10-methylene-5,6,7,8-tetrahydrofolate. R126 to R127 serves as a coordination point for dUMP. Residue C146 is the Nucleophile of the active site. DUMP-binding positions include R166 to D169, N177, and H207 to Y209. D169 is a binding site for (6R)-5,10-methylene-5,6,7,8-tetrahydrofolate. A (6R)-5,10-methylene-5,6,7,8-tetrahydrofolate-binding site is contributed by S263.

This sequence belongs to the thymidylate synthase family. Bacterial-type ThyA subfamily. In terms of assembly, homodimer.

The protein localises to the cytoplasm. It carries out the reaction dUMP + (6R)-5,10-methylene-5,6,7,8-tetrahydrofolate = 7,8-dihydrofolate + dTMP. Its pathway is pyrimidine metabolism; dTTP biosynthesis. Catalyzes the reductive methylation of 2'-deoxyuridine-5'-monophosphate (dUMP) to 2'-deoxythymidine-5'-monophosphate (dTMP) while utilizing 5,10-methylenetetrahydrofolate (mTHF) as the methyl donor and reductant in the reaction, yielding dihydrofolate (DHF) as a by-product. This enzymatic reaction provides an intracellular de novo source of dTMP, an essential precursor for DNA biosynthesis. This chain is Thymidylate synthase, found in Neisseria meningitidis serogroup C / serotype 2a (strain ATCC 700532 / DSM 15464 / FAM18).